A 158-amino-acid polypeptide reads, in one-letter code: 6,7-dimethyl-8-ribityllumazine synthase (158 aa).

5-amino-6-(D-ribitylamino)uracil is bound by residues Phe-23, 61-63 (SFE), and 85-87 (AVI). Position 90–91 (90–91 (ET)) interacts with (2S)-2-hydroxy-3-oxobutyl phosphate. His-93 acts as the Proton donor in catalysis. 5-amino-6-(D-ribitylamino)uracil is bound at residue Phe-118. Arg-132 provides a ligand contact to (2S)-2-hydroxy-3-oxobutyl phosphate.

This sequence belongs to the DMRL synthase family.

The enzyme catalyses (2S)-2-hydroxy-3-oxobutyl phosphate + 5-amino-6-(D-ribitylamino)uracil = 6,7-dimethyl-8-(1-D-ribityl)lumazine + phosphate + 2 H2O + H(+). The protein operates within cofactor biosynthesis; riboflavin biosynthesis; riboflavin from 2-hydroxy-3-oxobutyl phosphate and 5-amino-6-(D-ribitylamino)uracil: step 1/2. Its function is as follows. Catalyzes the formation of 6,7-dimethyl-8-ribityllumazine by condensation of 5-amino-6-(D-ribitylamino)uracil with 3,4-dihydroxy-2-butanone 4-phosphate. This is the penultimate step in the biosynthesis of riboflavin. The protein is 6,7-dimethyl-8-ribityllumazine synthase of Prochlorococcus marinus (strain MIT 9312).